The following is a 320-amino-acid chain: Cytochrome f (320 aa).

The N-terminal stretch at Met-1–Ala-35 is a signal peptide. Heme contacts are provided by Tyr-36, Cys-56, Cys-59, and His-60. The chain crosses the membrane as a helical span at residues Val-286–Lys-306.

This sequence belongs to the cytochrome f family. The 4 large subunits of the cytochrome b6-f complex are cytochrome b6, subunit IV (17 kDa polypeptide, petD), cytochrome f and the Rieske protein, while the 4 small subunits are PetG, PetL, PetM and PetN. The complex functions as a dimer. Heme serves as cofactor.

The protein localises to the plastid. It localises to the chloroplast thylakoid membrane. Component of the cytochrome b6-f complex, which mediates electron transfer between photosystem II (PSII) and photosystem I (PSI), cyclic electron flow around PSI, and state transitions. In Olimarabidopsis pumila (Dwarf rocket), this protein is Cytochrome f.